Here is a 165-residue protein sequence, read N- to C-terminus: Chorismate pyruvate-lyase (165 aa).

Positions 35, 77, 115, and 156 each coordinate substrate.

This sequence belongs to the UbiC family. Monomer.

It is found in the cytoplasm. The enzyme catalyses chorismate = 4-hydroxybenzoate + pyruvate. It functions in the pathway cofactor biosynthesis; ubiquinone biosynthesis. Removes the pyruvyl group from chorismate, with concomitant aromatization of the ring, to provide 4-hydroxybenzoate (4HB) for the ubiquinone pathway. This is Chorismate pyruvate-lyase from Enterobacter sp. (strain 638).